The chain runs to 574 residues: Frizzled and smoothened-like protein G (574 aa).

Positions 1–19 (MKSIIFITFFIFFLKKLNG) are cleaved as a signal peptide. The Extracellular segment spans residues 20–246 (LPNGYGVGLV…EKWNQIENLS (227 aa)). Residues 30–181 (DPNGQCMNYI…GLYEVPCFNP (152 aa)) enclose the FZ domain. Disulfide bonds link C35–C109, C48–C102, C91–C138, and C127–C178. Residues N119, N161, N187, N206, N233, and N244 are each glycosylated (N-linked (GlcNAc...) asparagine). The helical transmembrane segment at 247-267 (KVLSTISFVCSIYNILSFGIL) threads the bilayer. Over 268 to 273 (KKKKTK) the chain is Cytoplasmic. A helical membrane pass occupies residues 274 to 294 (YTICISALSASVALINLGDII). Over 295–324 (KIGVGYEKVLCPEPGRFATQVDDPLCGLTA) the chain is Extracellular. The helical transmembrane segment at 325-345 (ALFHVGICSTVLWTTTMAIYL) threads the bilayer. Topologically, residues 346 to 358 (YSAIKNIKLFKFR) are cytoplasmic. A helical transmembrane segment spans residues 359 to 379 (YFIIFNTGFSLTSLIIAASAS). At 380 to 401 (KFEAGTGSIECWIRDRWYSICL) the chain is on the extracellular side. Residues 402–422 (FWLPCGICLLIGTICIASVIV) form a helical membrane-spanning segment. At 423-445 (EIYKVSKNIKLSESETIMRQIKP) the chain is on the cytoplasmic side. The chain crosses the membrane as a helical span at residues 446–466 (IISVILVSGSFTYLFIIFFDI). Topologically, residues 467–502 (ERNFGGYRSAVTDYVLCLLNSTDNGIECHTSGPSYN) are extracellular. N486 is a glycosylation site (N-linked (GlcNAc...) asparagine). The helical transmembrane segment at 503–523 (PYFMFYFFMRFFGILFFLIYG) threads the bilayer. At 524 to 574 (TSKNARDSWYELFIKIKVSLSETSSTISNNSGGGSSQQKQQQQNEIKLEKI) the chain is on the cytoplasmic side. A compositionally biased stretch (low complexity) spans 550–568 (ISNNSGGGSSQQKQQQQNE). Residues 550–574 (ISNNSGGGSSQQKQQQQNEIKLEKI) are disordered.

This sequence belongs to the G-protein coupled receptor Fz/Smo family.

It is found in the membrane. The sequence is that of Frizzled and smoothened-like protein G (fslG) from Dictyostelium discoideum (Social amoeba).